We begin with the raw amino-acid sequence, 151 residues long: SsrA-binding protein (151 aa).

Belongs to the SmpB family.

The protein resides in the cytoplasm. In terms of biological role, required for rescue of stalled ribosomes mediated by trans-translation. Binds to transfer-messenger RNA (tmRNA), required for stable association of tmRNA with ribosomes. tmRNA and SmpB together mimic tRNA shape, replacing the anticodon stem-loop with SmpB. tmRNA is encoded by the ssrA gene; the 2 termini fold to resemble tRNA(Ala) and it encodes a 'tag peptide', a short internal open reading frame. During trans-translation Ala-aminoacylated tmRNA acts like a tRNA, entering the A-site of stalled ribosomes, displacing the stalled mRNA. The ribosome then switches to translate the ORF on the tmRNA; the nascent peptide is terminated with the 'tag peptide' encoded by the tmRNA and targeted for degradation. The ribosome is freed to recommence translation, which seems to be the essential function of trans-translation. The protein is SsrA-binding protein of Flavobacterium johnsoniae (strain ATCC 17061 / DSM 2064 / JCM 8514 / BCRC 14874 / CCUG 350202 / NBRC 14942 / NCIMB 11054 / UW101) (Cytophaga johnsonae).